The chain runs to 403 residues: MSAAARIAPQSAAVAAPAPATTAASAIAKAPSADVQSELDRAALEALELDSDVITSVRLDGLALTKIVKHCRDAHPASASGALLGMDLGGTLEISNVFALPNPGRSNSERDEEEDRSSRNATRYTSDMVRLLRDVNADANPVGLYQGCFLGAFLNSSVIDGLAAITGLVERDGAGSRGKGVLIVHDLAQSAQGNTSVKAYRLSPSFVDAHKKGKFHTQSLIDHKLTFSNILIEIPVSLRNTALLDAFLSSISTPSAPGPSIVQPSTSDLLRNPPSAALAPSYTSLNLALEPVLASSLESTLEIMDEHAAEAGNVGFQARQLAREKAKADAYLARKKAENAAREAQGLAPLPIEDVNRLFKIPAEPSRLEATLLLGQIDSSARRLAETAALGVIQLNAAKTGAV.

Residues 57–206 (VRLDGLALTK…VKAYRLSPSF (150 aa)) form the MPN domain. The tract at residues 99–122 (ALPNPGRSNSERDEEEDRSSRNAT) is disordered.

It belongs to the eIF-3 subunit H family. In terms of assembly, component of the eukaryotic translation initiation factor 3 (eIF-3) complex.

The protein localises to the cytoplasm. In terms of biological role, component of the eukaryotic translation initiation factor 3 (eIF-3) complex, which is involved in protein synthesis of a specialized repertoire of mRNAs and, together with other initiation factors, stimulates binding of mRNA and methionyl-tRNAi to the 40S ribosome. The eIF-3 complex specifically targets and initiates translation of a subset of mRNAs involved in cell proliferation. This Mycosarcoma maydis (Corn smut fungus) protein is Eukaryotic translation initiation factor 3 subunit H.